A 273-amino-acid polypeptide reads, in one-letter code: 3-methyl-2-oxobutanoate hydroxymethyltransferase (273 aa).

Residues Asp-49 and Asp-88 each coordinate Mg(2+). Residues Asp-49–Ser-50, Asp-88, and Lys-118 each bind 3-methyl-2-oxobutanoate. Residue Glu-120 coordinates Mg(2+). The active-site Proton acceptor is the Glu-187.

The protein belongs to the PanB family. In terms of assembly, homodecamer; pentamer of dimers. It depends on Mg(2+) as a cofactor.

Its subcellular location is the cytoplasm. It carries out the reaction 3-methyl-2-oxobutanoate + (6R)-5,10-methylene-5,6,7,8-tetrahydrofolate + H2O = 2-dehydropantoate + (6S)-5,6,7,8-tetrahydrofolate. The protein operates within cofactor biosynthesis; (R)-pantothenate biosynthesis; (R)-pantoate from 3-methyl-2-oxobutanoate: step 1/2. Functionally, catalyzes the reversible reaction in which hydroxymethyl group from 5,10-methylenetetrahydrofolate is transferred onto alpha-ketoisovalerate to form ketopantoate. This chain is 3-methyl-2-oxobutanoate hydroxymethyltransferase, found in Rhizobium etli (strain ATCC 51251 / DSM 11541 / JCM 21823 / NBRC 15573 / CFN 42).